The primary structure comprises 268 residues: Protein limb expression 1 homolog (268 aa).

This sequence belongs to the LIX1 family. As to quaternary structure, interacts with ft (via intracellular domain) and ds (via intracellular domain).

It localises to the apical cell membrane. The protein localises to the cytoplasm. Functionally, component of the Fat (ft) signaling pathway that functions in normal development of various organs such as the wing and leg. In developing imaginal disks, involved in regulating both the protein levels and apical localization of ft and ds. Involved in establishing planar cell polarity (PCP) along the anterior-posterior axis of the wing (the early Fz signaling event), probably by acting upstream of ds and ft to regulate Fz activity. This is Protein limb expression 1 homolog from Drosophila melanogaster (Fruit fly).